The following is a 693-amino-acid chain: Alpha-glucosidase (693 aa).

Residues Asp320 and Glu323 contribute to the active site. The active-site Proton donor is the Asp416.

Belongs to the glycosyl hydrolase 31 family.

The protein localises to the cytoplasm. It catalyses the reaction Hydrolysis of terminal, non-reducing (1-&gt;4)-linked alpha-D-glucose residues with release of alpha-D-glucose.. Its function is as follows. Major soluble alpha-glucosidase. The protein is Alpha-glucosidase (malA) of Saccharolobus solfataricus (strain ATCC 35092 / DSM 1617 / JCM 11322 / P2) (Sulfolobus solfataricus).